We begin with the raw amino-acid sequence, 594 residues long: Glutamate decarboxylase 1 (594 aa).

Positions 1 to 13 are enriched in low complexity; the sequence is MASSTPSSSATSS. The interval 1-23 is disordered; the sequence is MASSTPSSSATSSNAGADPNTTN. A Phosphoserine modification is found at serine 78. 190–192 contacts 4-aminobutanoate; the sequence is QLS. Lysine 405 carries the N6-(pyridoxal phosphate)lysine modification. Arginine 567 is a binding site for 4-aminobutanoate.

Belongs to the group II decarboxylase family. In terms of assembly, homodimer. Pyridoxal 5'-phosphate serves as cofactor.

The enzyme catalyses L-glutamate + H(+) = 4-aminobutanoate + CO2. Its function is as follows. Catalyzes the synthesis of the inhibitory neurotransmitter gamma-aminobutyric acid (GABA) with pyridoxal 5'-phosphate as cofactor. The chain is Glutamate decarboxylase 1 (GAD1) from Felis catus (Cat).